Here is a 385-residue protein sequence, read N- to C-terminus: Putative 8-amino-7-oxononanoate synthase (385 aa).

R21 contacts substrate. 108–109 (GY) lines the pyridoxal 5'-phosphate pocket. Position 133 (H133) interacts with substrate. Residues S182, 207 to 210 (DEAH), and 234 to 237 (TFGK) contribute to the pyridoxal 5'-phosphate site. K237 is subject to N6-(pyridoxal phosphate)lysine. S351 lines the substrate pocket.

This sequence belongs to the class-II pyridoxal-phosphate-dependent aminotransferase family. BioF subfamily. In terms of assembly, homodimer. Pyridoxal 5'-phosphate serves as cofactor.

The catalysed reaction is 6-carboxyhexanoyl-[ACP] + L-alanine + H(+) = (8S)-8-amino-7-oxononanoate + holo-[ACP] + CO2. It participates in cofactor biosynthesis; biotin biosynthesis. Catalyzes the decarboxylative condensation of pimeloyl-[acyl-carrier protein] and L-alanine to produce 8-amino-7-oxononanoate (AON), [acyl-carrier protein], and carbon dioxide. The sequence is that of Putative 8-amino-7-oxononanoate synthase (bioF) from Desulfosudis oleivorans (strain DSM 6200 / JCM 39069 / Hxd3) (Desulfococcus oleovorans).